A 147-amino-acid chain; its full sequence is Large ribosomal subunit protein uL15 (147 aa).

The tract at residues 1-55 (MKLDNLAPQPGAKKRKRRVGRGIAAGQGASCGFGMRGQKSRSGRPTRPGFEGGQM) is disordered. The span at 23 to 35 (IAAGQGASCGFGM) shows a compositional bias: gly residues.

It belongs to the universal ribosomal protein uL15 family. As to quaternary structure, part of the 50S ribosomal subunit.

Binds to the 23S rRNA. The polypeptide is Large ribosomal subunit protein uL15 (Synechococcus elongatus (strain ATCC 33912 / PCC 7942 / FACHB-805) (Anacystis nidulans R2)).